We begin with the raw amino-acid sequence, 206 residues long: Small ribosomal subunit protein eS1 (206 aa).

This sequence belongs to the eukaryotic ribosomal protein eS1 family.

The protein is Small ribosomal subunit protein eS1 of Halobacterium salinarum (strain ATCC 29341 / DSM 671 / R1).